The sequence spans 474 residues: PRAME family member 7 (474 aa).

The stretch at 97-122 (QSKLQVLDLRNVDENFCDIFSGATAS) is one LRR 1; degenerate repeat. An LRR 2; degenerate repeat occupies 177 to 201 (HVCCKELQVFGMPIHSIIEVLNMVE). One copy of the LRR 3; degenerate repeat lies at 202 to 228 (LDCIQEVEVCCPWELSTLVKFAPYLGQ). Residues 229–264 (MRNLRKLVLFNIRASACIPPDNKGQFIARFTSQFLK) form an LRR 4; degenerate repeat. LRR repeat units lie at residues 265-290 (LDYF…LRCL), 291-322 (QASL…RQLK), 323-341 (ELDL…PLTG), 347-374 (VATL…VLSR), and 375-399 (CSQL…LLRH).

It belongs to the PRAME family.

The sequence is that of PRAME family member 7 from Homo sapiens (Human).